A 205-amino-acid chain; its full sequence is Melanocortin-2 receptor accessory protein 2 (205 aa).

A glycan (N-linked (GlcNAc...) asparagine) is linked at Asn-9. Residues 45 to 65 (IVIGFWVGLAVFVIFMFFVLT) form a helical membrane-spanning segment. Position 89 is a phosphoserine (Ser-89).

Belongs to the MRAP family. In terms of assembly, homodimer and heterodimer. Forms antiparallel homodimers and heterodimers with MRAP. Interacts with MC1R, MC2R, MC3R, MC4R and MC5R. In terms of tissue distribution, expressed in the adrenal gland and brain. Not expressed in other tissues.

The protein localises to the cell membrane. Its subcellular location is the endoplasmic reticulum membrane. In terms of biological role, modulator of melanocortin receptor 4 (MC4R), a receptor involved in energy homeostasis. Plays a central role in the control of energy homeostasis and body weight regulation by increasing ligand-sensitivity of MC4R and MC4R-mediated generation of cAMP. May also act as a negative regulator of MC2R: competes with MRAP for binding to MC2R and impairs the binding of corticotropin (ACTH) to MC2R. May also regulate activity of other melanocortin receptors (MC1R, MC3R and MC5R); however, additional evidence is required in vivo. This is Melanocortin-2 receptor accessory protein 2 (MRAP2) from Homo sapiens (Human).